The sequence spans 304 residues: ATP phosphoribosyltransferase (304 aa).

This sequence belongs to the ATP phosphoribosyltransferase family. Long subfamily. The cofactor is Mg(2+).

The protein localises to the cytoplasm. The enzyme catalyses 1-(5-phospho-beta-D-ribosyl)-ATP + diphosphate = 5-phospho-alpha-D-ribose 1-diphosphate + ATP. It functions in the pathway amino-acid biosynthesis; L-histidine biosynthesis; L-histidine from 5-phospho-alpha-D-ribose 1-diphosphate: step 1/9. Its activity is regulated as follows. Feedback inhibited by histidine. Its function is as follows. Catalyzes the condensation of ATP and 5-phosphoribose 1-diphosphate to form N'-(5'-phosphoribosyl)-ATP (PR-ATP). Has a crucial role in the pathway because the rate of histidine biosynthesis seems to be controlled primarily by regulation of HisG enzymatic activity. The polypeptide is ATP phosphoribosyltransferase (Xylella fastidiosa (strain 9a5c)).